The primary structure comprises 61 residues: Small ribosomal subunit protein uS14C (61 aa).

4 residues coordinate Zn(2+): Cys24, Cys27, Cys40, and Cys43.

The protein belongs to the universal ribosomal protein uS14 family. Zinc-binding uS14 subfamily. As to quaternary structure, part of the 30S ribosomal subunit. Contacts proteins S3 and S10. Requires Zn(2+) as cofactor.

In terms of biological role, binds 16S rRNA, required for the assembly of 30S particles and may also be responsible for determining the conformation of the 16S rRNA at the A site. In Bacillus licheniformis (strain ATCC 14580 / DSM 13 / JCM 2505 / CCUG 7422 / NBRC 12200 / NCIMB 9375 / NCTC 10341 / NRRL NRS-1264 / Gibson 46), this protein is Small ribosomal subunit protein uS14C.